The chain runs to 151 residues: Probable cellulase Cel12b (151 aa).

Residues Glu50 and Glu133 contribute to the active site.

It belongs to the glycosyl hydrolase 12 (cellulase H) family.

In terms of biological role, probable cellulase. Can hydrolyze barley beta-glucan in vitro. Could be important for the survival of M.tuberculosis in the environment, perhaps in amoebal hosts. The sequence is that of Probable cellulase Cel12b from Mycobacterium tuberculosis (strain ATCC 25618 / H37Rv).